A 287-amino-acid polypeptide reads, in one-letter code: Lectin 10 (287 aa).

Over 1 to 11 (MALSNLKSNRT) the chain is Cytoplasmic. A helical transmembrane segment spans residues 12–31 (LSSSLITIFIISLFLQYHNI). Over 32-287 (KSQSSWQSRQ…IINWSFESAL (256 aa)) the chain is Extracellular. Residues Asn-124, Asn-147, Asn-243, and Asn-280 are each glycosylated (N-linked (GlcNAc...) asparagine).

The protein belongs to the leguminous lectin family.

The protein localises to the membrane. Functionally, may be involved in arbuscular mycorrhizal (AM) symbiosis with AM fungi. The protein is Lectin 10 of Medicago truncatula (Barrel medic).